Reading from the N-terminus, the 465-residue chain is Cysteine--tRNA ligase (465 aa).

A Zn(2+)-binding site is contributed by Cys-29. Positions 31 to 41 (ITPYDEVHLGH) match the 'HIGH' region motif. Residues Cys-212, His-237, and Glu-241 each coordinate Zn(2+). A 'KMSKS' region motif is present at residues 269–273 (KMSKS). Lys-272 contacts ATP.

Belongs to the class-I aminoacyl-tRNA synthetase family. As to quaternary structure, monomer. The cofactor is Zn(2+).

The protein resides in the cytoplasm. It carries out the reaction tRNA(Cys) + L-cysteine + ATP = L-cysteinyl-tRNA(Cys) + AMP + diphosphate. This chain is Cysteine--tRNA ligase, found in Endomicrobium trichonymphae.